Reading from the N-terminus, the 498-residue chain is Glutamate--tRNA ligase (498 aa).

Positions 12-22 (PSPTGHLHIGN) match the 'HIGH' region motif. The 'KMSKS' region motif lies at 259 to 263 (KLSKR). Residue Lys262 coordinates ATP.

It belongs to the class-I aminoacyl-tRNA synthetase family. Glutamate--tRNA ligase type 1 subfamily. Monomer.

It is found in the cytoplasm. The catalysed reaction is tRNA(Glu) + L-glutamate + ATP = L-glutamyl-tRNA(Glu) + AMP + diphosphate. Its function is as follows. Catalyzes the attachment of glutamate to tRNA(Glu) in a two-step reaction: glutamate is first activated by ATP to form Glu-AMP and then transferred to the acceptor end of tRNA(Glu). The polypeptide is Glutamate--tRNA ligase (Limosilactobacillus fermentum (strain NBRC 3956 / LMG 18251) (Lactobacillus fermentum)).